Here is a 249-residue protein sequence, read N- to C-terminus: MKLNERSLAFYATCDAPVDNAGFLYKKGGRHAAYHRRWFVLRGNMLFYFEDAASREPVGVIILEGCTVELVEAAEEFAFAVRFAGTRARTYVLAAESQDAMEGWVKALSRASFDYLRLVVRELEQQLAAVRGGGGMALPQPQPQSLPLPPSLPSALAPVPSLPSAPAPVPALPLPRRPSALPPKENGCAVWSTEATFRPGPEPPPPPPRRRASAPHGPLDMAPFARLHECYGQEIRALRGQWLSSRVQP.

Residues 17-113 form the PH domain; it reads PVDNAGFLYK…WVKALSRASF (97 aa). 2 disordered regions span residues 134-159 and 194-219; these read GGMA…LAPV and EATF…HGPL. The segment covering 140–152 has biased composition (pro residues); that stretch reads QPQPQSLPLPPSL. Position 213 is a phosphoserine (serine 213). The F&amp;H motif lies at 223–235; it reads PFARLHECYGQEI.

It belongs to the sesquipedalian family. In terms of assembly, forms homodimers and heterodimers with PHETA2. Interacts with OCRL and INPP5B. Interaction with OCRL may be important for endosomal morphology and function.

The protein localises to the early endosome. Its subcellular location is the recycling endosome. The protein resides in the golgi apparatus. It is found in the trans-Golgi network. It localises to the cytoplasmic vesicle. The protein localises to the clathrin-coated vesicle. Functionally, plays a role in endocytic trafficking. Required for receptor recycling from endosomes, both to the trans-Golgi network and the plasma membrane. This Homo sapiens (Human) protein is Sesquipedalian-1.